The chain runs to 548 residues: Membrane protein insertase YidC (548 aa).

A helical membrane pass occupies residues 6 to 26 (NLLVIALLFVSFMIWQAWEQD). A disordered region spans residues 28–56 (NPQPQTQQTTQTTTTAAGSAADQGVPASG). Positions 29–42 (PQPQTQQTTQTTTT) are enriched in low complexity. The next 4 membrane-spanning stretches (helical) occupy residues 350-370 (FVGN…GIMY), 424-444 (FPLI…MGSI), 458-478 (LSAQ…MFFI), and 499-519 (PVIF…YYIV).

It belongs to the OXA1/ALB3/YidC family. Type 1 subfamily. In terms of assembly, interacts with the Sec translocase complex via SecD. Specifically interacts with transmembrane segments of nascent integral membrane proteins during membrane integration.

It localises to the cell inner membrane. Functionally, required for the insertion and/or proper folding and/or complex formation of integral membrane proteins into the membrane. Involved in integration of membrane proteins that insert both dependently and independently of the Sec translocase complex, as well as at least some lipoproteins. Aids folding of multispanning membrane proteins. This is Membrane protein insertase YidC from Salmonella newport (strain SL254).